We begin with the raw amino-acid sequence, 301 residues long: MSQRTAPAPFLLKTYQLVDDAATDDVISWNEIGTTFVVWKTAEFAKDLLPKYFKHNNFSSFVRQLNTYGFRKIVPDKWEFANENFKRGQKELLTAIRRRKTVTSTPAGGKSVAAGASASPDNSGDDIGSSSTSSPDSKNPGSVDTPGKLSQFTDLSDENEKLKKDNQMLSSELVQAKKQCNELVAFLSQYVKVAPDMINRIMSQGTPSGSSLEELVKEVGGVKDLEEQGSYNDNDDKEDDDEKGDTLKLFGVLLKEKKKKRGPDENIETCGGRGKMMKTVDYNGPWMKMSSPAGESSKVCN.

A DNA-binding region spans residues 7–101; it reads PAPFLLKTYQ…LLTAIRRRKT (95 aa). Disordered regions lie at residues 103-160 and 221-244; these read TSTP…DENE and GVKDLEEQGSYNDNDDKEDDDEKG. Residues 107–142 show a composition bias toward low complexity; that stretch reads AGGKSVAAGASASPDNSGDDIGSSSTSSPDSKNPGS. A compositionally biased stretch (acidic residues) spans 233-243; that stretch reads DNDDKEDDDEK.

This sequence belongs to the HSF family. Homotrimer. In terms of processing, exhibits temperature-dependent phosphorylation.

The protein resides in the nucleus. Functionally, DNA-binding protein that specifically binds heat shock promoter elements (HSE) and activates transcription. This Solanum peruvianum (Peruvian tomato) protein is Heat shock factor protein HSF24 (HSF24).